Reading from the N-terminus, the 118-residue chain is Vesicle-associated membrane protein 1 (118 aa).

A compositionally biased stretch (low complexity) spans 1–15 (MSAPAQPPAEGTEGA). The segment at 1 to 38 (MSAPAQPPAEGTEGAAPGGGPPGPPPNTTSNRRLQQTQ) is disordered. Residues 1 to 96 (MSAPAQPPAE…KRKYWWKNCK (96 aa)) are Cytoplasmic-facing. Positions 28-38 (TTSNRRLQQTQ) are enriched in polar residues. In terms of domain architecture, v-SNARE coiled-coil homology spans 33–93 (RLQQTQAQVE…AKLKRKYWWK (61 aa)). Residue Ser63 is modified to Phosphoserine. A helical; Anchor for type IV membrane protein transmembrane segment spans residues 97-116 (MMIMLGAICAIIVVVIVIYI). Over 117 to 118 (FT) the chain is Vesicular.

Belongs to the synaptobrevin family. In terms of assembly, interacts with VAPA and VAPB. Post-translationally, (Microbial infection) Targeted and hydrolyzed by C.botulinum neurotoxin type D (BoNT/D, botD) which hydrolyzes the 61-Lys-|-Leu-62 bond and inhibits neurotransmitter release. This is a poor substrate for BoNT/D, high concentrations are required to cleave it in vitro. (Microbial infection) Targeted and hydrolyzed by C.botulinum neurotoxin type F (BoNT/F, botF) which hydrolyzes the 60-Gln-|-Lys-61 bond and inhibits neurotransmitter release. As to expression, expressed in brain and spleen (at protein level). Isoform 1 expressed at very high level in brain. Even higher level found in spinal cord. Isoform 3 expressed in kidney, spleen and liver. Isoforms 2 and 3 expressed in osteoblasts of trabecular bone. Also expressed in heart.

It is found in the cytoplasmic vesicle. The protein localises to the secretory vesicle. The protein resides in the synaptic vesicle membrane. It localises to the synapse. Its subcellular location is the synaptosome. It is found in the cytoplasmic vesicle membrane. The protein localises to the mitochondrion outer membrane. Involved in the targeting and/or fusion of transport vesicles to their target membrane. The protein is Vesicle-associated membrane protein 1 (Vamp1) of Rattus norvegicus (Rat).